Reading from the N-terminus, the 144-residue chain is Large ribosomal subunit protein uL15 (144 aa).

Residues 1 to 52 (MRLNTLSPAEGAKHAPKRVGRGIGSGLGKTAGRGHKGQNSRSGGGVRRGFEG) are disordered. Residues 21 to 31 (RGIGSGLGKTA) are compositionally biased toward gly residues.

Belongs to the universal ribosomal protein uL15 family. Part of the 50S ribosomal subunit.

In terms of biological role, binds to the 23S rRNA. This chain is Large ribosomal subunit protein uL15, found in Yersinia pseudotuberculosis serotype O:1b (strain IP 31758).